Here is a 389-residue protein sequence, read N- to C-terminus: Heat-inducible transcription repressor HrcA (389 aa).

It belongs to the HrcA family.

Its function is as follows. Negative regulator of class I heat shock genes (grpE-dnaK-dnaJ and groELS operons). Prevents heat-shock induction of these operons. The protein is Heat-inducible transcription repressor HrcA of Synechococcus sp. (strain JA-2-3B'a(2-13)) (Cyanobacteria bacterium Yellowstone B-Prime).